A 174-amino-acid chain; its full sequence is DNA replication inhibitor plutonium (174 aa).

ANK repeat units follow at residues 39 to 68 and 72 to 103; these read YGNT…NIFA and FGQN…DFNL. The residue at position 167 (Thr-167) is a Phosphothreonine.

Functionally, inhibits DNA replication early in developments. May bind and block the action of a replication or initiation factor. The sequence is that of DNA replication inhibitor plutonium (plu) from Drosophila melanogaster (Fruit fly).